Here is a 104-residue protein sequence, read N- to C-terminus: ATP-dependent Clp protease adapter protein ClpS (104 aa).

Belongs to the ClpS family. As to quaternary structure, binds to the N-terminal domain of the chaperone ClpA.

In terms of biological role, involved in the modulation of the specificity of the ClpAP-mediated ATP-dependent protein degradation. This chain is ATP-dependent Clp protease adapter protein ClpS, found in Nitratidesulfovibrio vulgaris (strain ATCC 29579 / DSM 644 / CCUG 34227 / NCIMB 8303 / VKM B-1760 / Hildenborough) (Desulfovibrio vulgaris).